Here is a 758-residue protein sequence, read N- to C-terminus: Inhibitor of nuclear factor kappa-B kinase subunit alpha (758 aa).

In terms of domain architecture, Protein kinase spans Trp15–Cys301. Residues Leu21–Val29 and Lys44 contribute to the ATP site. Asp145 functions as the Proton acceptor in the catalytic mechanism. Positions Leu456–Leu477 are leucine-zipper. The NEMO-binding stretch occupies residues Gln741 to Thr746.

This sequence belongs to the protein kinase superfamily. Ser/Thr protein kinase family. I-kappa-B kinase subfamily. As to quaternary structure, directly interacts with ikbkg/nemo.

It localises to the cytoplasm. It is found in the nucleus. The catalysed reaction is L-seryl-[I-kappa-B protein] + ATP = O-phospho-L-seryl-[I-kappa-B protein] + ADP + H(+). Its activity is regulated as follows. Activated when phosphorylated and inactivated when dephosphorylated. Phosphorylates inhibitors of NF-kappa-B thus leading to the dissociation of the inhibitor/NF-kappa-B complex and ultimately the degradation of the inhibitor. Phosphorylates 'Ser-10' of histone H3 at NF-kappa-B-regulated promoters during inflammatory responses triggered by cytokines. The sequence is that of Inhibitor of nuclear factor kappa-B kinase subunit alpha (chuk) from Danio rerio (Zebrafish).